The following is a 94-amino-acid chain: Integration host factor subunit beta (94 aa).

Belongs to the bacterial histone-like protein family. In terms of assembly, heterodimer of an alpha and a beta chain.

Functionally, this protein is one of the two subunits of integration host factor, a specific DNA-binding protein that functions in genetic recombination as well as in transcriptional and translational control. This is Integration host factor subunit beta from Chelativorans sp. (strain BNC1).